The following is a 1179-amino-acid chain: Pesticidal crystal protein Cry1Ad (1179 aa).

Belongs to the delta endotoxin family.

Its function is as follows. Promotes colloidosmotic lysis by binding to the midgut epithelial cells of many lepidopteran larvae. The sequence is that of Pesticidal crystal protein Cry1Ad (cry1Ad) from Bacillus thuringiensis subsp. aizawai.